An 859-amino-acid polypeptide reads, in one-letter code: MVSIAFYGGIPGGISTPITQQSEKSKCEENTMFQPYCYNNDSKNSMAESKEARDQEMNLKEESKEEKRRNDWWKIGMFLLCLAGTTGGILWWYEGLPQQHYIGLVAIGGRLNGSGQSNAIECWGSFPGCRPFQNYFSYETNRSMHMDNNTATLLEAYHREITFIYKSSCTDSDHCQEYQCKKVNLNSSDSSNSVRVEDVTNTAEYWGFKWLECNQTENFKTILVPENEMVNINDTDTWIPKGCNETWARVKRCPIDILYGIHPIRLCVQPPFFLVQEKGIADTSRIGNCGPTIFLGVLEDNKGVVRGDYTACNVRRLNINRKDYTGIYQVPIFYTCTFTNITSCNNEPIISVIMYETNQVQYLLCNNNNSNNYNCVVQSFGVIGQAHLELPRPNKRIRNQSFNQYNCSINNKTELETWKLVKTSGVTPLPISSEANTGLIRHKRDFGISAIVAAIVAATAIAASATMSYVALTEVNKIMEVQNHTFEVENSTLNGMDLIERQIKILYAMILQTHADVQLLKERQQVEETFNLIGCIERTHVFCHTGHPWNMSWGHLNESTQWDDWVSKMEDLNQEILTTLHGARNNLAQSMITFNTPDSIAQFGKDLWSHIGNWIPGLGASIIKYIVMFLLIYLLLTSSPKILRALWKVTSGAGSSGSRYLKKKFHHKHASREDTWDQAQHNIHLAGVTGGSGDKYYKQKYSRNDWNGESEEYNRRPKSWVKSIEAFGESYISEKTKGEISQPGAAINEHKNGSGGNNPHQGSLDLEIRSEGGNIYDCCIKAQEGTLAIPCCGFPLWLFWGLVIIVGRIAGYGLRGLAVIIRICIRGLNLIFEIIRKMLDYIGRALNPGTSHVSMPQYV.

Positions 1 to 6 are excised as a propeptide; the sequence is MVSIAF. At 7–614 the chain is on the extracellular side; sequence YGGIPGGIST…KDLWSHIGNW (608 aa). N-linked (GlcNAc...) asparagine; by host glycans are attached at residues Asn40, Asn112, Asn141, Asn148, Asn186, Asn214, Asn233, Asn244, Asn340, Asn368, Asn399, Asn406, and Asn411. The tract at residues 446–466 is fusion peptide; that stretch reads FGISAIVAAIVAATAIAASAT. N-linked (GlcNAc...) asparagine; by host glycosylation is found at Asn483 and Asn490. The immunosuppression stretch occupies residues 498–513; it reads LIERQIKILYAMILQT. 2 N-linked (GlcNAc...) asparagine; by host glycosylation sites follow: Asn550 and Asn557. 2 coiled-coil regions span residues 576 to 624 and 663 to 699; these read ILTT…SIIK and KKFH…YYKQ. A helical transmembrane segment spans residues 615–635; sequence IPGLGASIIKYIVMFLLIYLL. The Cytoplasmic segment spans residues 636 to 859; it reads LTSSPKILRA…TSHVSMPQYV (224 aa).

As to quaternary structure, the mature envelope protein (Env) consists of a trimer of SU-TM heterodimers attached by noncovalent interactions or by a labile interchain disulfide bond. In terms of processing, specific enzymatic cleavages in vivo yield mature proteins. Envelope glycoproteins are synthesized as an inactive precursor that is N-glycosylated and processed likely by host cell furin or by a furin-like protease in the Golgi to yield the mature SU and TM proteins. The cleavage site between SU and TM requires the minimal sequence [KR]-X-[KR]-R.

It localises to the virion membrane. Its subcellular location is the host cell membrane. In terms of biological role, the surface protein (SU) attaches the virus to the host cell by binding to its receptor. This interaction triggers the refolding of the transmembrane protein (TM) and is thought to activate its fusogenic potential by unmasking its fusion peptide. Fusion occurs at the host cell plasma membrane. The transmembrane protein (TM) acts as a class I viral fusion protein. Under the current model, the protein has at least 3 conformational states: pre-fusion native state, pre-hairpin intermediate state, and post-fusion hairpin state. During viral and target cell membrane fusion, the coiled coil regions (heptad repeats) assume a trimer-of-hairpins structure, positioning the fusion peptide in close proximity to the C-terminal region of the ectodomain. The formation of this structure appears to drive apposition and subsequent fusion of viral and target cell membranes. Membranes fusion leads to delivery of the nucleocapsid into the cytoplasm. This chain is Envelope glycoprotein (env), found in Equine infectious anemia virus (isolate 1369) (EIAV).